Here is a 242-residue protein sequence, read N- to C-terminus: Triosephosphate isomerase (242 aa).

A substrate-binding site is contributed by 8–10 (NWK). H91 serves as the catalytic Electrophile. The active-site Proton acceptor is E155. Substrate-binding residues include G161 and S192.

It belongs to the triosephosphate isomerase family. Homodimer.

The protein localises to the cytoplasm. It carries out the reaction D-glyceraldehyde 3-phosphate = dihydroxyacetone phosphate. It functions in the pathway carbohydrate biosynthesis; gluconeogenesis. Its pathway is carbohydrate degradation; glycolysis; D-glyceraldehyde 3-phosphate from glycerone phosphate: step 1/1. Involved in the gluconeogenesis. Catalyzes stereospecifically the conversion of dihydroxyacetone phosphate (DHAP) to D-glyceraldehyde-3-phosphate (G3P). The sequence is that of Triosephosphate isomerase from Wolbachia pipientis wMel.